The following is a 42-amino-acid chain: Photosystem II reaction center protein J (42 aa).

A helical transmembrane segment spans residues 10 to 30 (IPLWLVATVAGLAVIALLGVF).

It belongs to the PsbJ family. PSII is composed of 1 copy each of membrane proteins PsbA, PsbB, PsbC, PsbD, PsbE, PsbF, PsbH, PsbI, PsbJ, PsbK, PsbL, PsbM, PsbT, PsbX, PsbY, PsbZ, Psb30/Ycf12, at least 3 peripheral proteins of the oxygen-evolving complex and a large number of cofactors. It forms dimeric complexes.

It is found in the plastid. It localises to the chloroplast thylakoid membrane. One of the components of the core complex of photosystem II (PSII). PSII is a light-driven water:plastoquinone oxidoreductase that uses light energy to abstract electrons from H(2)O, generating O(2) and a proton gradient subsequently used for ATP formation. It consists of a core antenna complex that captures photons, and an electron transfer chain that converts photonic excitation into a charge separation. This is Photosystem II reaction center protein J from Chlorokybus atmophyticus (Soil alga).